The sequence spans 224 residues: MQFHFKVADAERDRDNVAATSNAAANPHAALQPQQPVALVEPKDAQHEIRLQNIVATFSVNCELDLKAINSRTRNSEYSPKRFRGVIMRMHSPRCTALIFRTGKVICTGARNEIEADIGSRKFARILQKLGFPVKFMEYKLQNIVATVDLRFPIRLENLNHVHGQFSSYEPEMFPGLIYRMVKPRIVLLIFVNGKVVFTGAKSRKDIMDCLEAISPILLSFRKT.

Residues 14 to 34 are disordered; the sequence is RDNVAATSNAAANPHAALQPQ. Positions 17 to 34 are enriched in low complexity; sequence VAATSNAAANPHAALQPQ. Tandem repeats lie at residues 51-127 and 141-218.

This sequence belongs to the TBP family. As to expression, primary spermatocytes in the adult testis and in a subset of cells in the dorsal medial region of the embryonic CNS.

It is found in the nucleus. In terms of biological role, acts as a transcription factor. Binds to the TATA box promoter element which lies close to the position of transcription initiation. May be essential for embryonic development. The protein is TBP-related factor (Trf) of Drosophila melanogaster (Fruit fly).